The primary structure comprises 520 residues: Ribonuclease Y (520 aa).

Residues 5–25 (ITIISSLLFLIVGLVVGSLIF) form a helical membrane-spanning segment. Positions 70-127 (RTEIENELRGRRTETQKAENRLLQREENLDRKDTSLSKREATLERKEESISKRQQQIE) are disordered. Residues 210–273 (TVSVVTLPND…EIARIALEKL (64 aa)) enclose the KH domain. Positions 336–429 (VLNHSLEVSK…VAAADALSAA (94 aa)) constitute an HD domain.

This sequence belongs to the RNase Y family.

It is found in the cell membrane. Endoribonuclease that initiates mRNA decay. The sequence is that of Ribonuclease Y from Listeria welshimeri serovar 6b (strain ATCC 35897 / DSM 20650 / CCUG 15529 / CIP 8149 / NCTC 11857 / SLCC 5334 / V8).